A 378-amino-acid polypeptide reads, in one-letter code: 8-demethyl-8-alpha-L-rhamnosyl tetracenomycin-C 2'-O-methyltransferase (378 aa).

Residues 195–201, Ser-210, Asp-227, 245–246, and Asp-268 contribute to the S-adenosyl-L-methionine site; these read EIGVGGY and DQ. Residue Asp-268 coordinates Mg(2+). His-271 (proton acceptor) is an active-site residue. The Mg(2+) site is built by Glu-296 and Asp-297.

The protein belongs to the methyltransferase OleY/MycE family. It depends on Mg(2+) as a cofactor.

It carries out the reaction 8-demethyl-8-alpha-L-rhamnosyl-tetracenomycin C + S-adenosyl-L-methionine = 8-demethyl-8-(2-O-methyl-alpha-L-rhamnosyl)-tetracenomycin C + S-adenosyl-L-homocysteine + H(+). The protein operates within antibiotic biosynthesis. O-methyltransferase involved in the biosynthesis of the permethylated L-rhamnose moiety of elloramycin, an antitumor polyketide. Mediates the methylation of the hydroxy groups at the 2'-position after the sugar moiety has been attached to the aglycon. The protein is 8-demethyl-8-alpha-L-rhamnosyl tetracenomycin-C 2'-O-methyltransferase of Streptomyces olivaceus.